The sequence spans 131 residues: Tegument protein ORF52 (131 aa).

The disordered stretch occupies residues 103 to 131 (SDGGTAKPPPGANNRRRRGASTTRAGVDD). The span at 122–131 (ASTTRAGVDD) shows a compositional bias: low complexity. Ser123 carries the post-translational modification Phosphoserine; by host.

Belongs to the herpesviridae BLRF2 family. In terms of assembly, homooligomer; homooligomerizes and binds double-stranded DNA (dsDNA) cooperatively. Interacts with host CGAS. Interacts with PQBP1.

It localises to the host cytoplasm. The protein localises to the virion tegument. In terms of biological role, plays a role in the inhibition of host innate immune system by targeting the CGAS enzymatic activity which is the principal cytosolic DNA sensor that detects invading viral DNA. Acts by inhibiting CGAS-DNA phase separation: directly binds double-stranded DNA (dsDNA) in a length dependent but sequence independent manner and is able to form DNA-induced phase separation in infected cells. DNA phase separation of ORF52 mediates disruption of liquid-like droplets in which CGAS is activated, thereby preventing CGAS activity. Targets also the HDP-RNP complex composed of DNA-PK subunits and paraspeckle proteins. This complex is a key nuclear regulator of DNA-mediated activation of innate immune response through the cGAS-STING pathway. The chain is Tegument protein ORF52 from Homo sapiens (Human).